Reading from the N-terminus, the 355-residue chain is Methylxanthine N3-demethylase NdmB (355 aa).

The Rieske domain occupies 19-131 (WHPVCTLNEF…CEVKYDIVWV (113 aa)). Residues Cys64, His66, Cys87, and His90 each coordinate [2Fe-2S] cluster.

The cofactor is [2Fe-2S] cluster.

The enzyme catalyses theobromine + NADH + O2 + H(+) = 7-methylxanthine + formaldehyde + NAD(+) + H2O. The catalysed reaction is theobromine + NADPH + O2 + H(+) = 7-methylxanthine + formaldehyde + NADP(+) + H2O. It catalyses the reaction 3-methylxanthine + NADH + O2 + H(+) = xanthine + formaldehyde + NAD(+) + H2O. It carries out the reaction 3-methylxanthine + NADPH + O2 + H(+) = xanthine + formaldehyde + NADP(+) + H2O. Functionally, involved in the caffeine degradation, which is the essential first step for assimilating the carbon and nitrogen in caffeine. Catalyzes the N3-demethylation of theobromine to produce 7-methylxanthine and formaldehyde. Also catalyzes the N3-demethylation of 3-methylxanthine, caffeine, and theophylline to xanthine, paraxanthine, and 1-methylxanthine, respectively. NADH is the preferred substrate. The chain is Methylxanthine N3-demethylase NdmB (ndmB) from Pseudomonas putida (Arthrobacter siderocapsulatus).